Here is a 221-residue protein sequence, read N- to C-terminus: Large ribosomal subunit protein uL4 (221 aa).

Residues 48 to 77 (TASTKTRGEVSGGGRKPWIQKHTGRARQGS) form a disordered region.

It belongs to the universal ribosomal protein uL4 family. Part of the 50S ribosomal subunit.

One of the primary rRNA binding proteins, this protein initially binds near the 5'-end of the 23S rRNA. It is important during the early stages of 50S assembly. It makes multiple contacts with different domains of the 23S rRNA in the assembled 50S subunit and ribosome. In terms of biological role, forms part of the polypeptide exit tunnel. In Thermosipho africanus (strain TCF52B), this protein is Large ribosomal subunit protein uL4.